We begin with the raw amino-acid sequence, 204 residues long: Protein PAXX (204 aa).

Residues Phe-37 to Ala-79 form the PISA domain. Phosphoserine is present on Ser-134. Positions Glu-143–Thr-204 are disordered. Thr-145 carries the post-translational modification Phosphothreonine. Residues Ser-148 and Ser-152 each carry the phosphoserine modification. Positions Gly-171 to Thr-204 are mediates interaction with XRCC5/Ku80 and XRCC6/Ku70 and association with the non-homologous end joining core complex. The short motif at Phe-190–Thr-204 is the XLM element.

This sequence belongs to the XRCC4-XLF family. PAXX subfamily. In terms of assembly, homodimer. Interacts with the DNA-bound XRCC5/Ku80 and XRCC6/Ku70 heterodimer (Ku complex); the interaction is direct. Associated component of the non-homologous end joining (NHEJ) complex, composed of the core proteins PRKDC, LIG4, XRCC4, XRCC6/Ku70, XRCC5/Ku86 and NHEJ1/XLF. Interacts with POLL (DNA polymerase lambda); promoting POLL recruitment to double-strand breaks (DSBs) and stimulation of the end-filling activity of POLL. Post-translationally, phosphorylation may inhibit interaction with the DNA-bound XRCC5/Ku80 and XRCC6/Ku70 heterodimer (Ku complex).

It localises to the nucleus. It is found in the chromosome. The protein localises to the cytoplasm. In terms of biological role, non-essential DNA repair protein involved in DNA non-homologous end joining (NHEJ); participates in double-strand break (DSB) repair and V(D)J recombination. May act as a scaffold required for accumulation of the Ku heterodimer, composed of XRCC5/Ku80 and XRCC6/Ku70, at double-strand break sites and promote the assembly and/or stability of the NHEJ machinery. Involved in NHEJ by promoting the ligation of blunt-ended DNA ends. Together with NHEJ1/XLF, collaborates with DNA polymerase lambda (POLL) to promote joining of non-cohesive DNA ends. Constitutes a non-essential component of classical NHEJ: has a complementary but distinct function with NHEJ1/XLF in DNA repair. Able to restrict infection by herpesvirus 1 (HSV-1) via an unknown mechanism. This chain is Protein PAXX, found in Homo sapiens (Human).